The primary structure comprises 368 residues: Ceramide synthase hyl-1 (368 aa).

7 consecutive transmembrane segments (helical) span residues 27-47 (FVDLLVPIYLAIPLVIIRILW), 92-112 (ILECFWRFSYYTFAFLYGLYV), 138-158 (IWWYYMIETGFYYSLLIGSTF), 165-185 (FWQLMVHHVITIFLLSSSWTI), 191-211 (GTLILLSHDVSDVFLEGGKLV), 225-245 (FVLFFSSWVATRLIYYPFIVI), and 275-295 (LIVFALILLFFLHIFWTFIIL). Residues 90-303 (KKILECFWRF…ILRIAYRTST (214 aa)) enclose the TLC domain. The disordered stretch occupies residues 306–368 (QAKDVRSDSD…ARHRRAPRKE (63 aa)). Positions 343–353 (TDDDDDEGEEE) are enriched in acidic residues. Over residues 357–368 (RKARHRRAPRKE) the composition is skewed to basic residues.

This sequence belongs to the sphingosine N-acyltransferase family.

It is found in the membrane. The catalysed reaction is a very long-chain fatty acyl-CoA + a sphingoid base = an N-(very-long-chain fatty acyl)-sphingoid base + CoA + H(+). It catalyses the reaction 15-methylhexadecasphinganine + a fatty acyl-CoA = an N-acyl-15-methylhexadecasphinganine + CoA + H(+). The enzyme catalyses a fatty acyl-CoA + sphinganine = an N-acylsphinganine + CoA + H(+). It carries out the reaction sphinganine + tetradecanoyl-CoA = N-(tetradecanoyl)-sphinganine + CoA + H(+). The catalysed reaction is hexacosanoyl-CoA + sphinganine = N-hexacosanoylsphinganine + CoA + H(+). Its pathway is lipid metabolism; sphingolipid metabolism. Catalyzes the acylation of sphingoid bases to form ceramides, which are key players in cell signaling events such as extending lifespan and enhancing stress resistance. C.elegans contain specific sphingoid bases, which are unique or different in structure compared to the sphingoid bases found in other animals. Two examples of these distinctive compounds are: 15-methylhexadecasphinganine and 15-methylhexadecasphing-4-enine. Exhibits substrate preference for fatty acyl-coA chains containing carbon chain length (C16-C18) and very long chains (24 carbons and more). This is Ceramide synthase hyl-1 (hyl-1) from Caenorhabditis elegans.